The sequence spans 39 residues: Cygnin (39 aa).

Q1 carries the pyrrolidone carboxylic acid modification. Intrachain disulfides connect C6–C33, C12–C28, and C16–C32.

It belongs to the transferrin family.

The chain is Cygnin from Cygnus atratus (Black swan).